The sequence spans 361 residues: MRMVFRWFGAGNDSVSLAHIRQIPGVEGIVWALHDIPPGEVWPLSRIMEIKEQAEQHQFHIDVVESVNVHEDIKLGLPTRDRYIEAYKQTIKHLAKAGVKVICYNFMPVFDWVRTDLYKKLEDGSTALFYEKKEVDEMNPKGLVETIASNKTFTMPGWEPERLASLKTLFEAYEHVSTEDLWDHLHYFLQEVIPVAEACDIKMAIHPDDPPWPIFGLPRIVTNHDNIRRLLKLVDHPTNGITLCSGALGADPNNQVPEMIREFADRIPFAHIRNIKRFDNGDFVETSHREQDGSIDIVSIVKAYHEVGFTGYVRPDHGRHIWDEQCRPGYGLYDRALGIMYLWGIWDSVQNGQRMHDLTAK.

It belongs to the mannonate dehydratase family. It depends on Fe(2+) as a cofactor. The cofactor is Mn(2+).

The enzyme catalyses D-mannonate = 2-dehydro-3-deoxy-D-gluconate + H2O. Its pathway is carbohydrate metabolism; pentose and glucuronate interconversion. Catalyzes the dehydration of D-mannonate. This is Mannonate dehydratase 1 (uxuA1) from Halalkalibacterium halodurans (strain ATCC BAA-125 / DSM 18197 / FERM 7344 / JCM 9153 / C-125) (Bacillus halodurans).